Here is a 583-residue protein sequence, read N- to C-terminus: Torsin-1A-interacting protein 1 (583 aa).

Basic and acidic residues predominate over residues 1–12 (MAGDGRRAEAVR). Disordered regions lie at residues 1–254 (MAGD…RSSS) and 271–293 (AHDK…WAPQ). The Nuclear segment spans residues 1–338 (MAGDGRRAEA…NASFVKRNRW (338 aa)). Serine 60 is subject to Phosphoserine. Basic and acidic residues-rich tracts occupy residues 74-101 (VAKE…EVRE) and 115-124 (RPQETEEMKT). Phosphoserine occurs at positions 135 and 143. Methionine 146 carries the methionine sulfoxide modification. Phosphoserine occurs at positions 154, 156, and 157. A compositionally biased stretch (polar residues) spans 165–174 (QTDLSQTISK). 2 positions are modified to phosphoserine: serine 186 and serine 215. Positions 216-225 (EEGETEEDDQ) are enriched in acidic residues. Threonine 220 carries the post-translational modification Phosphothreonine. Phosphoserine occurs at positions 227, 230, and 242. Residues 238 to 250 (RSRDSDESGDKTT) are compositionally biased toward basic and acidic residues. The segment covering 277-287 (SVLSSGYQKTP) has biased composition (polar residues). Methionine 301 is subject to Methionine sulfoxide. Serine 305 is subject to Phosphoserine. Lysine 308 is covalently cross-linked (Glycyl lysine isopeptide (Lys-Gly) (interchain with G-Cter in SUMO2)). Residues serine 309 and serine 315 each carry the phosphoserine modification. Residues 309–328 (SELGNQSPSTSSRQVTGQPQ) are disordered. A helical transmembrane segment spans residues 339 to 355 (WLLPLIAALASGSFWFF). Residues 356 to 583 (STPEVETTAV…ENALKRGICL (228 aa)) lie on the Perinuclear space side of the membrane. The segment at 356–583 (STPEVETTAV…ENALKRGICL (228 aa)) is interaction with TOR1A. The stretch at 359-435 (EVETTAVQEF…SEQIADAYSS (77 aa)) forms a coiled coil. Asparagine 399 is a glycosylation site (N-linked (GlcNAc...) asparagine). At methionine 552 the chain carries Methionine sulfoxide.

It belongs to the TOR1AIP family. Interacts with ATP1B4. Interacts with TOR1A (ATP-bound). Interacts with TOR1B, TOR2A and TOR3A. Interacts with VIM. Phosphorylated. Dephosphorylated at Ser-309 and Ser-315 by serine/threonine-protein phosphatase PP1. Expressed in muscle, liver and kidney. In terms of tissue distribution, major isoform present in liver, brain and heart (at protein level). Expressed at lower levels than isoform 4 in lung, kidney and spleen (at protein level). Similar levels of isoforms 1 and 4 are observed in ovary, testis and pancreas (at protein level). As to expression, expressed at higher levels than isoform 1 in lung, kidney and spleen (at protein level). Expressed at lower levels than isoform 1 in liver, brain and heart (at protein level). Similar levels of isoforms 1 and 4 are observed in ovary, testis and pancreas (at protein level).

Its subcellular location is the nucleus inner membrane. It localises to the nucleus envelope. The protein localises to the nucleus. Its function is as follows. Required for nuclear membrane integrity. Induces TOR1A and TOR1B ATPase activity and is required for their location on the nuclear membrane. Binds to A- and B-type lamins. Possible role in membrane attachment and assembly of the nuclear lamina. This Homo sapiens (Human) protein is Torsin-1A-interacting protein 1 (TOR1AIP1).